The chain runs to 503 residues: TGF-beta receptor type-1 (503 aa).

The N-terminal stretch at methionine 1–alanine 33 is a signal peptide. The Extracellular segment spans residues leucine 34 to leucine 126. 5 disulfides stabilise this stretch: cysteine 36-cysteine 54, cysteine 38-cysteine 41, cysteine 48-cysteine 71, cysteine 86-cysteine 100, and cysteine 101-cysteine 106. An N-linked (GlcNAc...) asparagine glycan is attached at asparagine 45. The helical transmembrane segment at alanine 127–isoleucine 147 threads the bilayer. Topologically, residues cysteine 148 to methionine 503 are cytoplasmic. Residue serine 165 is modified to Phosphoserine. One can recognise a GS domain in the interval threonine 175 to threonine 204. 2 positions are modified to phosphothreonine; by TGFBR2: threonine 185 and threonine 186. Serine 187, serine 189, and serine 191 each carry phosphoserine; by TGFBR2. An FKBP1A-binding motif is present at residues leucine 193–proline 194. The 291-residue stretch at isoleucine 205–leucine 495 folds into the Protein kinase domain. ATP-binding positions include isoleucine 211–valine 219 and lysine 232. Residue lysine 268 forms a Glycyl lysine isopeptide (Lys-Gly) (interchain with G-Cter in ubiquitin) linkage. The active-site Proton acceptor is the aspartate 333. A Glycyl lysine isopeptide (Lys-Gly) (interchain with G-Cter in SUMO) cross-link involves residue lysine 391.

This sequence belongs to the protein kinase superfamily. TKL Ser/Thr protein kinase family. TGFB receptor subfamily. As to quaternary structure, homodimer; in the endoplasmic reticulum but also at the cell membrane. Heterohexamer; TGFB1, TGFB2 and TGFB3 homodimeric ligands assemble a functional receptor composed of two TGFBR1 and TGFBR2 heterodimers to form a ligand-receptor heterohexamer. The respective affinity of TGBRB1 and TGFBR2 for the ligands may modulate the kinetics of assembly of the receptor and may explain the different biological activities of TGFB1, TGFB2 and TGFB3. Component of a complex composed of TSC22D1 (via N-terminus), TGFBR1 and TGFBR2; the interaction between TSC22D1 and TGFBR1 is inhibited by SMAD7 and promoted by TGFB1. Interacts with CD109; inhibits TGF-beta receptor activation in keratinocytes. Interacts with RBPMS. Interacts (unphosphorylated) with FKBP1A; prevents TGFBR1 phosphorylation by TGFBR2 and stabilizes it in the inactive conformation. Interacts with SMAD2, SMAD3 and ZFYVE9; ZFYVE9 recruits SMAD2 and SMAD3 to the TGF-beta receptor. Interacts with TRAF6 and MAP3K7; induces MAP3K7 activation by TRAF6. Interacts with PARD6A; involved in TGF-beta induced epithelial to mesenchymal transition. Interacts with NEDD4L. Interacts with SMAD7, SMURF1 and SMURF2; SMAD7 recruits NEDD4L, SMURF1 and SMURF2 to the TGF-beta receptor. Interacts with USP15 and VPS39. Interacts with SDCBP (via C-terminus). Interacts with CAV1 and this interaction is impaired in the presence of SDCBP. Interacts with APPL1; interaction is TGF beta dependent; mediates trafficking of the TGFBR1 from the endosomes to the nucleus via microtubules in a TRAF6-dependent manner. Interacts with GPR50; this interaction promotes the constitutive activation of SMAD signaling pathway. Requires Mg(2+) as cofactor. Mn(2+) is required as a cofactor. In terms of processing, phosphorylated at basal levels in the absence of ligand. Activated upon phosphorylation by TGFBR2, mainly in the GS domain. Phosphorylation in the GS domain abrogates FKBP1A-binding. Post-translationally, N-Glycosylated. Ubiquitinated; undergoes ubiquitination catalyzed by several E3 ubiquitin ligases including SMURF1, SMURF2 and NEDD4L2. Results in the proteasomal and/or lysosomal degradation of the receptor thereby negatively regulating its activity. Deubiquitinated by USP15, leading to stabilization of the protein and enhanced TGF-beta signal. Its ubiquitination and proteasome-mediated degradation is negatively regulated by SDCBP. Ubiquitinated by BFAR via'Lys-63'-linked ubiquitination at Lys-268, leading to TGF-beta signaling activation. In terms of tissue distribution, found in all tissues examined, most abundant in placenta and least abundant in brain and heart. Expressed in a variety of cancer cell lines.

It localises to the cell membrane. It is found in the cell junction. The protein localises to the tight junction. The protein resides in the cell surface. Its subcellular location is the membrane raft. The catalysed reaction is L-threonyl-[receptor-protein] + ATP = O-phospho-L-threonyl-[receptor-protein] + ADP + H(+). The enzyme catalyses L-seryl-[receptor-protein] + ATP = O-phospho-L-seryl-[receptor-protein] + ADP + H(+). Its activity is regulated as follows. Kept in an inactive conformation by FKBP1A preventing receptor activation in absence of ligand. CD109 is another inhibitor of the receptor. Its function is as follows. Transmembrane serine/threonine kinase forming with the TGF-beta type II serine/threonine kinase receptor, TGFBR2, the non-promiscuous receptor for the TGF-beta cytokines TGFB1, TGFB2 and TGFB3. Transduces the TGFB1, TGFB2 and TGFB3 signal from the cell surface to the cytoplasm and is thus regulating a plethora of physiological and pathological processes including cell cycle arrest in epithelial and hematopoietic cells, control of mesenchymal cell proliferation and differentiation, wound healing, extracellular matrix production, immunosuppression and carcinogenesis. The formation of the receptor complex composed of 2 TGFBR1 and 2 TGFBR2 molecules symmetrically bound to the cytokine dimer results in the phosphorylation and the activation of TGFBR1 by the constitutively active TGFBR2. Activated TGFBR1 phosphorylates SMAD2 which dissociates from the receptor and interacts with SMAD4. The SMAD2-SMAD4 complex is subsequently translocated to the nucleus where it modulates the transcription of the TGF-beta-regulated genes. This constitutes the canonical SMAD-dependent TGF-beta signaling cascade. Also involved in non-canonical, SMAD-independent TGF-beta signaling pathways. For instance, TGFBR1 induces TRAF6 autoubiquitination which in turn results in MAP3K7 ubiquitination and activation to trigger apoptosis. Also regulates epithelial to mesenchymal transition through a SMAD-independent signaling pathway through PARD6A phosphorylation and activation. The protein is TGF-beta receptor type-1 (TGFBR1) of Homo sapiens (Human).